We begin with the raw amino-acid sequence, 251 residues long: Triosephosphate isomerase (251 aa).

9–11 is a binding site for substrate; sequence NWK. Histidine 95 (electrophile) is an active-site residue. Residue glutamate 167 is the Proton acceptor of the active site. Substrate contacts are provided by residues glycine 173, serine 212, and 233–234; that span reads GG.

It belongs to the triosephosphate isomerase family. In terms of assembly, homodimer.

The protein localises to the cytoplasm. It catalyses the reaction D-glyceraldehyde 3-phosphate = dihydroxyacetone phosphate. The protein operates within carbohydrate biosynthesis; gluconeogenesis. Its pathway is carbohydrate degradation; glycolysis; D-glyceraldehyde 3-phosphate from glycerone phosphate: step 1/1. Involved in the gluconeogenesis. Catalyzes stereospecifically the conversion of dihydroxyacetone phosphate (DHAP) to D-glyceraldehyde-3-phosphate (G3P). The sequence is that of Triosephosphate isomerase from Ectopseudomonas mendocina (strain ymp) (Pseudomonas mendocina).